Consider the following 228-residue polypeptide: Homeobox protein Hox-B6a (228 aa).

Positions 132–137 match the Antp-type hexapeptide motif; the sequence is VYPWMQ. Positions 150–209 form a DNA-binding region, homeobox; that stretch reads GRRGRQTYTRYQTLELEKEFHFNRYLTRRRRIEIAHALCLTERQIKIWFQNRRMKWKKEN.

Belongs to the Antp homeobox family.

The protein resides in the nucleus. Functionally, sequence-specific transcription factor which is part of a developmental regulatory system that provides cells with specific positional identities on the anterior-posterior axis. In Danio rerio (Zebrafish), this protein is Homeobox protein Hox-B6a (hoxb6a).